We begin with the raw amino-acid sequence, 856 residues long: Rab effector MyRIP (856 aa).

Positions 4–124 constitute a RabBD domain; that stretch reads KLDLSGLTDD…TQSLEWFYNN (121 aa). Residues 63 to 105 form an FYVE-type zinc finger; sequence CCMRCCSPFTFLVNARRRCGECKFSVCKSCCSYQKHEKLWVCC. Positions 143–560 are myosin-binding; that stretch reads KKHRLESGAC…AQVSDNVSET (418 aa). A PKA-binding region spans residues 193-209; that stretch reads VALQVAEEAIEEAISKA. Positions 232–248 are negative regulation of PKA-binding; sequence LAEELAGTILQRIIRKQ. The interval 251-287 is disordered; that stretch reads KADLHAEEEEPECTRPQSSGVKARGEGTAAPPGRHKA. Ser299 is modified (phosphoserine). Polar residues predominate over residues 302 to 311; the sequence is TEDTLKTSSA. Disordered stretches follow at residues 302 to 323, 350 to 376, 392 to 578, 592 to 625, 778 to 805, and 826 to 845; these read TEDT…DRAQ, QSPD…KPKS, YDEL…SAEE, SEKE…NNQG, RRDQ…APPV, and LLQG…TKDL. Phosphoserine is present on Ser351. Residues 395-405 are compositionally biased toward acidic residues; the sequence is LGSDSEEDFDY. Low complexity-rich tracts occupy residues 427 to 437 and 450 to 460; these read PAQAQSSGQGP and SDSETSSTSSS. The actin-binding stretch occupies residues 495 to 856; it reads FNPQAAGGET…EPVLESAVMY (362 aa). 4 stretches are compositionally biased toward polar residues: residues 551-574, 613-625, 784-793, and 826-843; these read AQVS…SSTD, QKGS…NNQG, RSQVQTIDTS, and LLQG…SNTK.

As to quaternary structure, binds MYO5A, MYO7A and F-actin. Binds RAB27A that has been activated by GTP-binding via its N-terminus. Interacts with PRKAR2A. Interacts with components of the exocyst complex, including EXOC3 and EXOC4.

The protein resides in the cytoplasm. The protein localises to the perinuclear region. It localises to the cytoplasmic vesicle. Its subcellular location is the secretory vesicle. It is found in the melanosome. Its function is as follows. Rab effector protein involved in melanosome transport. Serves as link between melanosome-bound RAB27A and the motor proteins MYO5A and MYO7A. May link RAB27A-containing vesicles to actin filaments. Functions as a protein kinase A-anchoring protein (AKAP). May act as a scaffolding protein that links PKA to components of the exocytosis machinery, thus facilitating exocytosis, including insulin release. This Rattus norvegicus (Rat) protein is Rab effector MyRIP (Myrip).